The primary structure comprises 626 residues: Myelin-associated glycoprotein (626 aa).

The N-terminal stretch at 1-19 (MIFLTALPLFWIMISASRG) is a signal peptide. Positions 20–325 (GHWGAWMPSS…RTVGLSVMYA (306 aa)) are interaction with RTN4R and RTN4RL2. Topologically, residues 20-516 (GHWGAWMPSS…HRLMWAKIGP (497 aa)) are extracellular. Residues 22 to 120 (WGAWMPSSIS…LGGKYYFRGD (99 aa)) form the Ig-like V-type domain. Disulfide bonds link cysteine 37-cysteine 165, cysteine 42-cysteine 100, and cysteine 159-cysteine 217. 65 to 67 (YPK) contributes to the a ganglioside GT1b (d18:1(4E)) binding site. N-linked (GlcNAc...) asparagine glycosylation is present at asparagine 99. A glycan (N-linked (GlcNAc...) asparagine; partial) is linked at asparagine 106. Residues arginine 118 and 124-128 (YNQYT) contribute to the a ganglioside GT1b (d18:1(4E)) site. Ig-like C2-type domains follow at residues 139 to 237 (NTPN…MDVK), 241 to 325 (VIVE…VMYA), 327 to 412 (WKPT…VEFA), and 413 to 508 (PVLL…GAHR). 2 N-linked (GlcNAc...) asparagine glycosylation sites follow: asparagine 223 and asparagine 246. Residues cysteine 261 and cysteine 305 are joined by a disulfide bond. Asparagine 315 is a glycosylation site (N-linked (GlcNAc...) asparagine). Cysteine 347 and cysteine 392 are oxidised to a cystine. An N-linked (GlcNAc...) asparagine glycan is attached at asparagine 406. 2 disulfides stabilise this stretch: cysteine 421/cysteine 430 and cysteine 432/cysteine 488. N-linked (GlcNAc...) asparagine glycans are attached at residues asparagine 450 and asparagine 454. A helical transmembrane segment spans residues 517–536 (VGAVVAFAILIAIVCYITQT). Cysteine 531 carries S-palmitoyl cysteine lipidation. Residues 537–626 (RRKKNVTESP…LAEYAEIRVK (90 aa)) are Cytoplasmic-facing. Serine 545, serine 547, and serine 549 each carry phosphoserine. Residues 577-626 (LGSERRLLGLRGEPPELDLSYSHSDLGKRPTKDSYTLTEELAEYAEIRVK) form a required for normal axon myelination in the central nervous system region. The interval 582–608 (RLLGLRGEPPELDLSYSHSDLGKRPTK) is disordered.

Belongs to the immunoglobulin superfamily. SIGLEC (sialic acid binding Ig-like lectin) family. In terms of assembly, monomer and homodimer. Interacts (via the first three N-terminal Ig-like domains) with RTN4R and RTN4RL2. Interacts with RTN4R. Interacts with isoform 2 of BSG. In terms of processing, N-glycosylated. Post-translationally, phosphorylated on tyrosine residues. Ubiquitinated, leading to proteasomal degradation. In terms of tissue distribution, both isoform 1 and isoform 2 are detected in myelinated structures in the central and peripheral nervous system, in periaxonal myelin and at Schmidt-Lanterman incisures. Detected in optic nerve, in oligodendroglia and in periaxonal myelin sheaths. Detected in compact myelin (at protein level). Both isoform 1 and isoform 2 are detected in the central and peripheral nervous system.

The protein resides in the cell membrane. Its subcellular location is the membrane raft. In terms of biological role, adhesion molecule that mediates interactions between myelinating cells and neurons by binding to neuronal sialic acid-containing gangliosides and to the glycoproteins RTN4R and RTN4RL2. Not required for initial myelination, but seems to play a role in the maintenance of normal axon myelination. Protects motoneurons against apoptosis, also after injury; protection against apoptosis is probably mediated via interaction with neuronal RTN4R and RTN4RL2. Required to prevent degeneration of myelinated axons in adults; this probably depends on binding to gangliosides on the axon cell membrane. Negative regulator of neurite outgrowth; in dorsal root ganglion neurons the inhibition is mediated primarily via binding to neuronal RTN4R or RTN4RL2 and to a lesser degree via binding to neuronal gangliosides. In cerebellar granule cells the inhibition is mediated primarily via binding to neuronal gangliosides. In sensory neurons, inhibition of neurite extension depends only partially on RTN4R, RTN4RL2 and gangliosides. Inhibits axon longitudinal growth. Inhibits axon outgrowth by binding to RTN4R. Preferentially binds to alpha-2,3-linked sialic acid. Binds ganglioside Gt1b. This Homo sapiens (Human) protein is Myelin-associated glycoprotein (MAG).